A 228-amino-acid polypeptide reads, in one-letter code: MQNRWKDWVHVTKLDPDKSLPPAVIDEIATSGTDALMLSGTLNVTIENLGHLFKQVAQYGLPLVVEPAGPEAVLCEGIDLLFVPSVMNSNSVQWIVGKHQQWAQQSSIRWDKVIPEAYIVLNSSSSVGKVTGADCGLTPAEAAAYASVADHYFRFPIVYVEYSGMYGDPKMVRSIAEVVDRAILYYGGGISSADKAAEMGRWADTIVVGNAVYDLGPDVLRATVKAVQ.

K13 is a sn-glycerol 1-phosphate binding site. 2 residues coordinate Mg(2+): D15 and T41. Sn-glycerol 1-phosphate contacts are provided by residues 159-164 (YVEYSG), G189, and 209-210 (GN).

The protein belongs to the GGGP/HepGP synthase family. Group I subfamily. It depends on Mg(2+) as a cofactor.

Its subcellular location is the cytoplasm. It catalyses the reaction sn-glycerol 1-phosphate + (2E,6E,10E)-geranylgeranyl diphosphate = sn-3-O-(geranylgeranyl)glycerol 1-phosphate + diphosphate. It participates in membrane lipid metabolism; glycerophospholipid metabolism. In terms of biological role, prenyltransferase that catalyzes the transfer of the geranylgeranyl moiety of geranylgeranyl diphosphate (GGPP) to the C3 hydroxyl of sn-glycerol-1-phosphate (G1P). This reaction is the first ether-bond-formation step in the biosynthesis of archaeal membrane lipids. The polypeptide is Geranylgeranylglyceryl phosphate synthase (Methanosphaerula palustris (strain ATCC BAA-1556 / DSM 19958 / E1-9c)).